A 340-amino-acid chain; its full sequence is Speriolin-like protein (340 aa).

2 disordered regions span residues 42 to 73 (GGGH…RFTS) and 94 to 135 (APLS…KLSP). S60 carries the phosphoserine modification. Over residues 123 to 133 (PHSHRGTDRKL) the composition is skewed to basic and acidic residues. At S134 the chain carries Phosphoserine.

It belongs to the speriolin family.

It is found in the cytoplasm. The sequence is that of Speriolin-like protein (SPATC1L) from Homo sapiens (Human).